Here is a 291-residue protein sequence, read N- to C-terminus: ATP synthase gamma chain (291 aa).

The protein belongs to the ATPase gamma chain family. As to quaternary structure, F-type ATPases have 2 components, CF(1) - the catalytic core - and CF(0) - the membrane proton channel. CF(1) has five subunits: alpha(3), beta(3), gamma(1), delta(1), epsilon(1). CF(0) has three main subunits: a, b and c.

It is found in the cell inner membrane. In terms of biological role, produces ATP from ADP in the presence of a proton gradient across the membrane. The gamma chain is believed to be important in regulating ATPase activity and the flow of protons through the CF(0) complex. The sequence is that of ATP synthase gamma chain from Nitratidesulfovibrio vulgaris (strain ATCC 29579 / DSM 644 / CCUG 34227 / NCIMB 8303 / VKM B-1760 / Hildenborough) (Desulfovibrio vulgaris).